The following is a 631-amino-acid chain: Iron transport multicopper oxidase FET3 (631 aa).

The signal sequence occupies residues 1–25 (MKVSTHHFLPSLLVALWSWATVAQA). Topologically, residues 26–564 (ATHTFNWTTG…ANIPDGFTAK (539 aa)) are extracellular. 2 N-linked (GlcNAc...) asparagine glycosylation sites follow: asparagine 31 and asparagine 81. Plastocyanin-like domains lie at 50–148 (ITCN…LVVE) and 195–297 (NLII…LMLN). Residues histidine 85 and histidine 87 each contribute to the Cu cation site. N-linked (GlcNAc...) asparagine glycans are attached at residues asparagine 92 and asparagine 117. Cu cation-binding residues include histidine 130 and histidine 132. Asparagine 199, asparagine 203, asparagine 249, asparagine 270, asparagine 297, asparagine 364, and asparagine 413 each carry an N-linked (GlcNAc...) asparagine glycan. One can recognise a Plastocyanin-like 3 domain in the interval 387–506 (NPLVYGTNTN…QGLALLLIEA (120 aa)). Histidine 418, histidine 421, histidine 423, histidine 488, cysteine 489, histidine 490, and histidine 494 together coordinate Cu cation. A helical transmembrane segment spans residues 565–585 (GIVAMTFSCLAGVLGLISLST). Residues 586-630 (YGLMGVKKSEEEIIRDLGMDPDAVEKVDVSDINSDEDSSRTSKNI) are Cytoplasmic-facing. The tract at residues 610-631 (EKVDVSDINSDEDSSRTSKNIE) is disordered. Residues 622–631 (DSSRTSKNIE) show a composition bias toward basic and acidic residues.

It belongs to the multicopper oxidase family. Cu cation is required as a cofactor.

The protein localises to the cell membrane. Iron transport multicopper ferroxidase required for Fe(2+) high affinity uptake. Required to oxidize Fe(2+) and release it from the transporter. Essential component of copper-dependent iron transport. In Kluyveromyces lactis (strain ATCC 8585 / CBS 2359 / DSM 70799 / NBRC 1267 / NRRL Y-1140 / WM37) (Yeast), this protein is Iron transport multicopper oxidase FET3 (FET3).